The sequence spans 191 residues: Protein YceI (191 aa).

A signal peptide spans 1 to 22; it reads MKKSLLGLTFASLMFSAGSAVA.

The protein belongs to the UPF0312 family. Type 1 subfamily.

The protein resides in the periplasm. The chain is Protein YceI from Shigella boydii serotype 4 (strain Sb227).